Reading from the N-terminus, the 456-residue chain is MQLSTLTALSPLDGRYQDKVTPLRAIFSEFGLMKFRVAVEVRWLQKLASTADITEVPPFSTQANAFLDGIVANFNEADAARIKEIERTTNHDVKAVEYFLKEKIQNEVELVKVSEFIHFACTSEDINNLSHALMLSTARDEVILPEWQKLIDEITRLAEEYKTIPLLSRTHGQPASPSTVGKEMANVVYRLKRQFKQLQNAEILGKINGAVGNYNAHLSAYPNIDWHKFSEEFVTSLGIQWNPYTTQIEPHDYITEFFDAVVRFNTIIIDFDRDLWGYIALNHFKQRTIAGEIGSSTMPHKVNPIDFENSEGNLGLANAVMTHLGQKLPISRWQRDLTDSTVLRNLGVGLGYCLIAYASTRKGISKLEVNQPHLLEELNQNWEVLAEPIQTVMRRYGIEKPYEKLKELTRGKRVTEQAMREFIDKLDIPQEEKLRLQKLTPATYIGAAVELVEKLS.

N(6)-(1,2-dicarboxyethyl)-AMP is bound by residues 15–16 (RY), 90–92 (NHD), and 122–123 (TS). His171 acts as the Proton donor/acceptor in catalysis. Position 247 (Gln247) interacts with N(6)-(1,2-dicarboxyethyl)-AMP. The active-site Proton donor/acceptor is Ser295. N(6)-(1,2-dicarboxyethyl)-AMP is bound by residues Ser296, 301–303 (KVN), Asn309, Arg335, and 340–344 (STVLR).

It belongs to the lyase 1 family. Adenylosuccinate lyase subfamily. In terms of assembly, homotetramer. Residues from neighboring subunits contribute catalytic and substrate-binding residues to each active site.

The enzyme catalyses N(6)-(1,2-dicarboxyethyl)-AMP = fumarate + AMP. It carries out the reaction (2S)-2-[5-amino-1-(5-phospho-beta-D-ribosyl)imidazole-4-carboxamido]succinate = 5-amino-1-(5-phospho-beta-D-ribosyl)imidazole-4-carboxamide + fumarate. The protein operates within purine metabolism; AMP biosynthesis via de novo pathway; AMP from IMP: step 2/2. It functions in the pathway purine metabolism; IMP biosynthesis via de novo pathway; 5-amino-1-(5-phospho-D-ribosyl)imidazole-4-carboxamide from 5-amino-1-(5-phospho-D-ribosyl)imidazole-4-carboxylate: step 2/2. Catalyzes two reactions in de novo purine nucleotide biosynthesis. Catalyzes the breakdown of 5-aminoimidazole- (N-succinylocarboxamide) ribotide (SAICAR or 2-[5-amino-1-(5-phospho-beta-D-ribosyl)imidazole-4-carboxamido]succinate) to 5-aminoimidazole-4-carboxamide ribotide (AICAR or 5-amino-1-(5-phospho-beta-D-ribosyl)imidazole-4-carboxamide) and fumarate, and of adenylosuccinate (ADS or N(6)-(1,2-dicarboxyethyl)-AMP) to adenosine monophosphate (AMP) and fumarate. The sequence is that of Adenylosuccinate lyase (purB) from Haemophilus influenzae (strain ATCC 51907 / DSM 11121 / KW20 / Rd).